The primary structure comprises 273 residues: Large ribosomal subunit protein uL2cz/uL2cy (273 aa).

Disordered regions lie at residues 1-22 and 223-254; these read MAIHLYKTSTPSTRNGAVDSQV and MNPVDHPHGGGEGRAPIGRKKPTTPWGYPALG.

It belongs to the universal ribosomal protein uL2 family. Part of the 50S ribosomal subunit.

It localises to the plastid. Its subcellular location is the chloroplast. The chain is Large ribosomal subunit protein uL2cz/uL2cy (rpl2-A) from Drimys granadensis.